Here is a 180-residue protein sequence, read N- to C-terminus: Probable chorismate pyruvate-lyase (180 aa).

Substrate is bound by residues Arg-76, Leu-113, and Glu-171.

This sequence belongs to the UbiC family.

It is found in the cytoplasm. It catalyses the reaction chorismate = 4-hydroxybenzoate + pyruvate. Its pathway is cofactor biosynthesis; ubiquinone biosynthesis. Its function is as follows. Removes the pyruvyl group from chorismate, with concomitant aromatization of the ring, to provide 4-hydroxybenzoate (4HB) for the ubiquinone pathway. The chain is Probable chorismate pyruvate-lyase from Pseudoalteromonas translucida (strain TAC 125).